The sequence spans 164 residues: ATP synthase subunit b 2 (164 aa).

Residues 4–24 traverse the membrane as a helical segment; that stretch reads TFWAFVGLVLFLALLAYFKVP.

It belongs to the ATPase B chain family. As to quaternary structure, F-type ATPases have 2 components, F(1) - the catalytic core - and F(0) - the membrane proton channel. F(1) has five subunits: alpha(3), beta(3), gamma(1), delta(1), epsilon(1). F(0) has three main subunits: a(1), b(2) and c(10-14). The alpha and beta chains form an alternating ring which encloses part of the gamma chain. F(1) is attached to F(0) by a central stalk formed by the gamma and epsilon chains, while a peripheral stalk is formed by the delta and b chains.

The protein resides in the cell inner membrane. Its function is as follows. F(1)F(0) ATP synthase produces ATP from ADP in the presence of a proton or sodium gradient. F-type ATPases consist of two structural domains, F(1) containing the extramembraneous catalytic core and F(0) containing the membrane proton channel, linked together by a central stalk and a peripheral stalk. During catalysis, ATP synthesis in the catalytic domain of F(1) is coupled via a rotary mechanism of the central stalk subunits to proton translocation. Functionally, component of the F(0) channel, it forms part of the peripheral stalk, linking F(1) to F(0). The chain is ATP synthase subunit b 2 from Bartonella quintana (strain Toulouse) (Rochalimaea quintana).